A 117-amino-acid polypeptide reads, in one-letter code: Large ribosomal subunit protein uL18 (117 aa).

It belongs to the universal ribosomal protein uL18 family. Part of the 50S ribosomal subunit; part of the 5S rRNA/L5/L18/L25 subcomplex. Contacts the 5S and 23S rRNAs.

Functionally, this is one of the proteins that bind and probably mediate the attachment of the 5S RNA into the large ribosomal subunit, where it forms part of the central protuberance. This is Large ribosomal subunit protein uL18 from Acidithiobacillus ferrooxidans (strain ATCC 23270 / DSM 14882 / CIP 104768 / NCIMB 8455) (Ferrobacillus ferrooxidans (strain ATCC 23270)).